Here is a 341-residue protein sequence, read N- to C-terminus: tRNA N6-adenosine threonylcarbamoyltransferase (341 aa).

Fe cation is bound by residues H117 and H121. Substrate contacts are provided by residues V139 to G143, D172, G185, D189, and N278. D307 lines the Fe cation pocket.

The protein belongs to the KAE1 / TsaD family. It depends on Fe(2+) as a cofactor.

The protein localises to the cytoplasm. It carries out the reaction L-threonylcarbamoyladenylate + adenosine(37) in tRNA = N(6)-L-threonylcarbamoyladenosine(37) in tRNA + AMP + H(+). Its function is as follows. Required for the formation of a threonylcarbamoyl group on adenosine at position 37 (t(6)A37) in tRNAs that read codons beginning with adenine. Is involved in the transfer of the threonylcarbamoyl moiety of threonylcarbamoyl-AMP (TC-AMP) to the N6 group of A37, together with TsaE and TsaB. TsaD likely plays a direct catalytic role in this reaction. The sequence is that of tRNA N6-adenosine threonylcarbamoyltransferase from Bacillus licheniformis (strain ATCC 14580 / DSM 13 / JCM 2505 / CCUG 7422 / NBRC 12200 / NCIMB 9375 / NCTC 10341 / NRRL NRS-1264 / Gibson 46).